The chain runs to 158 residues: NAD(P)H-quinone oxidoreductase subunit J, chloroplastic (158 aa).

This sequence belongs to the complex I 30 kDa subunit family. NDH is composed of at least 16 different subunits, 5 of which are encoded in the nucleus.

The protein resides in the plastid. The protein localises to the chloroplast thylakoid membrane. The enzyme catalyses a plastoquinone + NADH + (n+1) H(+)(in) = a plastoquinol + NAD(+) + n H(+)(out). The catalysed reaction is a plastoquinone + NADPH + (n+1) H(+)(in) = a plastoquinol + NADP(+) + n H(+)(out). Functionally, NDH shuttles electrons from NAD(P)H:plastoquinone, via FMN and iron-sulfur (Fe-S) centers, to quinones in the photosynthetic chain and possibly in a chloroplast respiratory chain. The immediate electron acceptor for the enzyme in this species is believed to be plastoquinone. Couples the redox reaction to proton translocation, and thus conserves the redox energy in a proton gradient. In Daucus carota (Wild carrot), this protein is NAD(P)H-quinone oxidoreductase subunit J, chloroplastic.